Reading from the N-terminus, the 433-residue chain is Dihydrolipoyllysine-residue acetyltransferase component of pyruvate dehydrogenase complex (433 aa).

The Lipoyl-binding domain occupies Ala2 to Asp77. N6-lipoyllysine is present on Lys43. Disordered regions lie at residues Asp80 to Arg134 and Tyr164 to Thr204. 2 stretches are compositionally biased toward basic and acidic residues: residues Met84–Glu103 and Glu117–Thr126. Residues Lys128–Leu165 enclose the Peripheral subunit-binding (PSBD) domain. Residues Asn166–Ser185 are compositionally biased toward low complexity. The active site involves His404.

Belongs to the 2-oxoacid dehydrogenase family. Forms a 24-polypeptide structural core with octahedral symmetry. It depends on (R)-lipoate as a cofactor.

The enzyme catalyses N(6)-[(R)-dihydrolipoyl]-L-lysyl-[protein] + acetyl-CoA = N(6)-[(R)-S(8)-acetyldihydrolipoyl]-L-lysyl-[protein] + CoA. In terms of biological role, the pyruvate dehydrogenase complex catalyzes the overall conversion of pyruvate to acetyl-CoA and CO(2). It contains multiple copies of three enzymatic components: pyruvate dehydrogenase (E1), dihydrolipoamide acetyltransferase (E2) and lipoamide dehydrogenase (E3). The sequence is that of Dihydrolipoyllysine-residue acetyltransferase component of pyruvate dehydrogenase complex (pdhC) from Staphylococcus epidermidis (strain ATCC 35984 / DSM 28319 / BCRC 17069 / CCUG 31568 / BM 3577 / RP62A).